Reading from the N-terminus, the 377-residue chain is Protein RecA (377 aa).

Residue 65–72 participates in ATP binding; it reads GPESSGKT. The tract at residues 329 to 377 is disordered; sequence GDEEAAATKATETKTDAPKDKDKGKTKAKDKPADVTPGQIELAPDKSAK. A compositionally biased stretch (basic and acidic residues) spans 339 to 361; the sequence is TETKTDAPKDKDKGKTKAKDKPA.

This sequence belongs to the RecA family.

It localises to the cytoplasm. Functionally, can catalyze the hydrolysis of ATP in the presence of single-stranded DNA, the ATP-dependent uptake of single-stranded DNA by duplex DNA, and the ATP-dependent hybridization of homologous single-stranded DNAs. It interacts with LexA causing its activation and leading to its autocatalytic cleavage. The protein is Protein RecA of Levilactobacillus brevis (strain ATCC 367 / BCRC 12310 / CIP 105137 / JCM 1170 / LMG 11437 / NCIMB 947 / NCTC 947) (Lactobacillus brevis).